The following is a 116-amino-acid chain: Large ribosomal subunit protein bL19 (116 aa).

This sequence belongs to the bacterial ribosomal protein bL19 family.

Functionally, this protein is located at the 30S-50S ribosomal subunit interface and may play a role in the structure and function of the aminoacyl-tRNA binding site. The chain is Large ribosomal subunit protein bL19 from Staphylococcus aureus (strain USA300).